The sequence spans 326 residues: Putative ubiquitin-conjugating enzyme E2 38 (326 aa).

The UBC core domain occupies 54-214 (NWVKKVQDEW…VFLLSLKTMV (161 aa)). Cys-140 (glycyl thioester intermediate) is an active-site residue. The disordered stretch occupies residues 297-326 (LAEKPKPPVNNANTENQSKKKTRKRSRSSR). Residues 315–326 (KKKTRKRSRSSR) are compositionally biased toward basic residues.

Belongs to the ubiquitin-conjugating enzyme family.

The enzyme catalyses S-ubiquitinyl-[E1 ubiquitin-activating enzyme]-L-cysteine + [E2 ubiquitin-conjugating enzyme]-L-cysteine = [E1 ubiquitin-activating enzyme]-L-cysteine + S-ubiquitinyl-[E2 ubiquitin-conjugating enzyme]-L-cysteine.. The protein operates within protein modification; protein ubiquitination. Accepts the ubiquitin from the E1 complex and catalyzes its covalent attachment to other proteins. The sequence is that of Putative ubiquitin-conjugating enzyme E2 38 (UBC38) from Arabidopsis thaliana (Mouse-ear cress).